The following is a 305-amino-acid chain: MIRQRTLKEIVKTTGVGLHSGRKVTLTLRPAAANTGIIYRRTDVNPPVDFPADPASVRDTMLCTALVNDEGVRISTVEHLNAALAGMGIDNIIVEVDAPEIPIMDGSASPFVYLLQQAGIEMQNVPKRFIRIKKPVRFEDGDKWAEFVPFNGFRMDFEIDFNHPAIESDEQRLLFDFSSQGFVREISRARTFGFMRDIEYLQSQNLVLGGSFDNAIVLDDYRILNEEGLRFENEFVTHKVLDAIGDLYMCGHPIIGEFRAYKSGHGLNNQLLRAVLADQEAWEWTTFEEEVGSPVAFAEPNMVLA.

Zn(2+)-binding residues include histidine 79, histidine 238, and aspartate 242. Histidine 265 (proton donor) is an active-site residue.

The protein belongs to the LpxC family. It depends on Zn(2+) as a cofactor.

The catalysed reaction is a UDP-3-O-[(3R)-3-hydroxyacyl]-N-acetyl-alpha-D-glucosamine + H2O = a UDP-3-O-[(3R)-3-hydroxyacyl]-alpha-D-glucosamine + acetate. It functions in the pathway glycolipid biosynthesis; lipid IV(A) biosynthesis; lipid IV(A) from (3R)-3-hydroxytetradecanoyl-[acyl-carrier-protein] and UDP-N-acetyl-alpha-D-glucosamine: step 2/6. Catalyzes the hydrolysis of UDP-3-O-myristoyl-N-acetylglucosamine to form UDP-3-O-myristoylglucosamine and acetate, the committed step in lipid A biosynthesis. This Vibrio parahaemolyticus serotype O3:K6 (strain RIMD 2210633) protein is UDP-3-O-acyl-N-acetylglucosamine deacetylase.